The following is a 100-amino-acid chain: MIMKYFCTVMIAIALVGCTATPPPTQKAQQSKVSPTRTLDMEALCKAQAAQRYNTGAQKIAVTGFEQFQGSYEMRGNTFRKESFVCSFDADGQFLHLSMR.

Positions 1–17 (MIMKYFCTVMIAIALVG) are cleaved as a signal peptide. Cysteine 18 is lipidated: N-palmitoyl cysteine. Cysteine 18 carries S-diacylglycerol cysteine lipidation.

It localises to the cell membrane. This is an uncharacterized protein from Salmonella typhi.